Consider the following 653-residue polypeptide: Macrolide export ATP-binding/permease protein MacB (653 aa).

The ABC transporter domain maps to L6–P244. Residue G42 to S49 coordinates ATP. Transmembrane regions (helical) follow at residues F277–G297, L526–M546, L587–L607, and F617–P637.

Belongs to the ABC transporter superfamily. Macrolide exporter (TC 3.A.1.122) family. As to quaternary structure, homodimer.

The protein resides in the cell inner membrane. Functionally, non-canonical ABC transporter that contains transmembrane domains (TMD), which form a pore in the inner membrane, and an ATP-binding domain (NBD), which is responsible for energy generation. Confers resistance against macrolides. In Bradyrhizobium diazoefficiens (strain JCM 10833 / BCRC 13528 / IAM 13628 / NBRC 14792 / USDA 110), this protein is Macrolide export ATP-binding/permease protein MacB.